A 297-amino-acid polypeptide reads, in one-letter code: B-lymphocyte antigen CD20 (297 aa).

Over 1 to 56 the chain is Cytoplasmic; the sequence is MTTPRNSVNGTFPAEPMKGPIAMQSGPKPLFRRMSSLVGPTQSFFMRESKTLGAVQ. Serine 36 is modified (phosphoserine). Residues 57-78 form a helical membrane-spanning segment; that stretch reads IMNGLFHIALGGLLMIPAGIYA. The interval 74–80 is epitope 1; the sequence is AGIYAPI. Topologically, residues 79–84 are extracellular; that stretch reads PICVTV. A helical membrane pass occupies residues 85–105; that stretch reads WYPLWGGIMYIISGSLLAATE. Topologically, residues 106 to 120 are cytoplasmic; it reads KNSRKCLVKGKMIMN. Cysteine 111 carries the S-palmitoyl cysteine lipid modification. A helical transmembrane segment spans residues 121–141; it reads SLSLFAAISGMILSIMDILNI. Residues 142–188 are Extracellular-facing; the sequence is KISHFLKMESLNFIRAHTPYINIYNCEPANPSEKNSPSTQYCYSIQS. Residues 146 to 160 form an epitope 2 region; it reads FLKMESLNFIRAHTP. Cysteines 167 and 183 form a disulfide. Residues 168-175 form an epitope 3 (recognized by antibodies, including Rituximab) region; it reads EPANPSEK. The chain crosses the membrane as a helical span at residues 189 to 209; sequence LFLGILSVMLIFAFFQELVIA. Residues 210 to 297 lie on the Cytoplasmic side of the membrane; the sequence is GIVENEWKRT…SSPIENDSSP (88 aa). The S-palmitoyl cysteine moiety is linked to residue cysteine 220. The residue at position 225 (serine 225) is a Phosphoserine. Threonine 239 is modified (phosphothreonine). Residues 247–297 are disordered; it reads VGLTETSSQPKNEEDIEIIPIQEEEEEETETNFPEPPQDQESSPIENDSSP. A compositionally biased stretch (acidic residues) spans 260-276; it reads EDIEIIPIQEEEEEETE. Positions 285–297 are enriched in polar residues; that stretch reads DQESSPIENDSSP.

This sequence belongs to the MS4A family. As to quaternary structure, forms homotetramers. Interacts with the heavy and light chains of cell surface IgM, the antigen-binding components of the BCR. Phosphorylated on serines and threonines in resting B-cells. Protein kinase C/PKC can use CD20 as substrate. In terms of tissue distribution, expressed on B-cells.

It localises to the cell membrane. B-lymphocyte-specific membrane protein that plays a role in the regulation of cellular calcium influx necessary for the development, differentiation, and activation of B-lymphocytes. Functions as a store-operated calcium (SOC) channel component promoting calcium influx after activation by the B-cell receptor/BCR. The sequence is that of B-lymphocyte antigen CD20 (MS4A1) from Homo sapiens (Human).